Reading from the N-terminus, the 187-residue chain is Elongation factor P (187 aa).

At K34 the chain carries N6-(3,6-diaminohexanoyl)-5-hydroxylysine.

It belongs to the elongation factor P family. In terms of processing, may be beta-lysylated on the epsilon-amino group of Lys-34 by the combined action of EpmA and EpmB, and then hydroxylated on the C5 position of the same residue by EpmC (if this protein is present). Lysylation is critical for the stimulatory effect of EF-P on peptide-bond formation. The lysylation moiety may extend toward the peptidyltransferase center and stabilize the terminal 3-CCA end of the tRNA. Hydroxylation of the C5 position on Lys-34 may allow additional potential stabilizing hydrogen-bond interactions with the P-tRNA.

The protein resides in the cytoplasm. Its pathway is protein biosynthesis; polypeptide chain elongation. Involved in peptide bond synthesis. Alleviates ribosome stalling that occurs when 3 or more consecutive Pro residues or the sequence PPG is present in a protein, possibly by augmenting the peptidyl transferase activity of the ribosome. Modification of Lys-34 is required for alleviation. The polypeptide is Elongation factor P (Buchnera aphidicola subsp. Schizaphis graminum (strain Sg)).